Here is a 367-residue protein sequence, read N- to C-terminus: Histidinol-phosphate aminotransferase (367 aa).

K227 carries the post-translational modification N6-(pyridoxal phosphate)lysine.

This sequence belongs to the class-II pyridoxal-phosphate-dependent aminotransferase family. Histidinol-phosphate aminotransferase subfamily. As to quaternary structure, homodimer. Pyridoxal 5'-phosphate serves as cofactor.

The catalysed reaction is L-histidinol phosphate + 2-oxoglutarate = 3-(imidazol-4-yl)-2-oxopropyl phosphate + L-glutamate. Its pathway is amino-acid biosynthesis; L-histidine biosynthesis; L-histidine from 5-phospho-alpha-D-ribose 1-diphosphate: step 7/9. In Leptospira borgpetersenii serovar Hardjo-bovis (strain JB197), this protein is Histidinol-phosphate aminotransferase.